We begin with the raw amino-acid sequence, 773 residues long: Lon protease homolog 2, peroxisomal (773 aa).

The Lon N-terminal domain maps to 9-198 (LPVILVTSGV…MCIKWMNEKK (190 aa)). 336–343 (GPPGIGKT) contacts ATP. A Lon proteolytic domain is found at 587–766 (PLPAGVCFGL…EDVIGAMMDK (180 aa)). Active-site residues include Ser-672 and Lys-715. Residues 771–773 (AKL) carry the Microbody targeting signal motif.

This sequence belongs to the peptidase S16 family.

The protein resides in the peroxisome matrix. It catalyses the reaction Hydrolysis of proteins in presence of ATP.. Functionally, ATP-dependent serine protease that mediates the selective degradation of misfolded and unassembled polypeptides in the peroxisomal matrix. Necessary for type 2 peroxisome targeting signal (PTS2)-containing protein processing and facilitates peroxisome matrix protein import. The polypeptide is Lon protease homolog 2, peroxisomal (Caenorhabditis elegans).